We begin with the raw amino-acid sequence, 697 residues long: U-box domain-containing protein 18 (697 aa).

Residues 23 to 210 form a U-box N-terminal domain (UND) required for EXO70B1 binding and crucial for the negative regulation of ABA-dependent stomatal movement region; it reads SISIVTLLDS…INRILDHVGI (188 aa). The U-box domain maps to 287–361; the sequence is LKVEDLLCPI…RKHCKTNGIV (75 aa). ARM repeat units follow at residues 420-459, 461-500, 502-544, 546-587, 589-631, and 657-696; these read SFNR…NLSK, VTGK…YLSS, EDYS…GLLM, SDNH…KLAE, PDGT…NLCL, and NGEY…FVHA.

As to quaternary structure, interacts with EXO70B1 via its U-box N-terminal domain (UND).

The protein resides in the endomembrane system. The enzyme catalyses S-ubiquitinyl-[E2 ubiquitin-conjugating enzyme]-L-cysteine + [acceptor protein]-L-lysine = [E2 ubiquitin-conjugating enzyme]-L-cysteine + N(6)-ubiquitinyl-[acceptor protein]-L-lysine.. It participates in protein modification; protein ubiquitination. Its function is as follows. Functions as an E3 ubiquitin ligase. Mediates EXO70B1 ubiquitination. Involved in the regulation of abscisic acid (ABA)-mediated stomatal movements. The sequence is that of U-box domain-containing protein 18 from Arabidopsis thaliana (Mouse-ear cress).